The following is a 57-amino-acid chain: Serine protease inhibitor Kazal-type 1 (57 aa).

Positions 4 to 57 constitute a Kazal-like domain; that stretch reads LQRQANCNLKVNGCNKIYNPICGSDGITYANECLLCLENKKRQTSILVEKSGPC. Intrachain disulfides connect cysteine 10–cysteine 39, cysteine 17–cysteine 36, and cysteine 25–cysteine 57.

The protein resides in the secreted. Serine protease inhibitor which exhibits anti-trypsin activity. In the pancreas, protects against trypsin-catalyzed premature activation of zymogens. In terms of biological role, in the male reproductive tract, binds to sperm heads where it modulates sperm capacitance by inhibiting calcium uptake and nitrogen oxide (NO) production. This chain is Serine protease inhibitor Kazal-type 1 (SPINK1), found in Canis lupus familiaris (Dog).